Consider the following 149-residue polypeptide: Transcription factor Atoh7 (149 aa).

The 53-residue stretch at 41-93 (RRRLAANARERRRMQGLNTAFDRLRRVVPQWGQDKKLSKYETLQMALSYIIAL) folds into the bHLH domain.

As to quaternary structure, forms a heterodimer with TCF3 isoform E47; interaction may be required for DNA-binding in certain situations. As to expression, expressed in retinal ganglion cells. Expressed in the cerebellum, trapezoid body, ventral nucleus of the lateral lamniscus and in areas of the auditory hindbrain such as the cochlear nucleus, lateral superior olive and medial nucleus of the trapezoid body. Expressed in the modiolar nerve root and in the cochlear in a small group of bushy neurons within the acoustic nerve. Expressed weakly in the sensory epithelia of the saccule and utricle.

Its subcellular location is the nucleus. The protein resides in the perikaryon. The protein localises to the cell projection. It is found in the axon. Functionally, transcription factor that binds to DNA at the consensus sequence 5'-CAG[GC]TG-3'. Dimerization with TCF3 isoform E47 may be required in certain situations. Binds to gene promoters and enhancer elements, and thereby regulates a transcriptional program of retinal ganglion cell (RGC) determinant genes. Although the exact mechanism is not certain, retinal transcription regulation by ATOH7 has a role in RGC determination and survival, photoreceptor population development, targeting of RGC axons to the optic nerve and development of the retino-hypothalamic tract. Binds to its own promoter and enhancer sequences, suggesting autoregulation of ATOH7 transcription. Required for retinal circadian rhythm photoentrainment. Plays a role in brainstem auditory signaling and binaural processing. The sequence is that of Transcription factor Atoh7 from Mus musculus (Mouse).